The chain runs to 181 residues: Succinate dehydrogenase [ubiquinone] cytochrome b small subunit, mitochondrial (181 aa).

A mitochondrion-targeting transit peptide spans 1–31; the sequence is MMLPRSMKFMTGRRIFHTATVRAFQSTAKKS. The Mitochondrial matrix portion of the chain corresponds to 32 to 66; that stretch reads LTIPFLPVLPQKPGGVRGTPNDAYVPPPENKLEGS. A helical transmembrane segment spans residues 67 to 88; sequence YHWYMEKIFALSVVPLATTAML. Topologically, residues 89–98 are mitochondrial intermembrane; that stretch reads TTGPLSTAAD. Residues 99 to 118 form a helical membrane-spanning segment; the sequence is SFFSVMLLGYCYMEFNSCIT. Cysteine 109 contributes to the heme binding site. Over 119–127 the chain is Mitochondrial matrix; the sequence is DYISERVYG. Tyrosine 120 serves as a coordination point for a ubiquinone. The chain crosses the membrane as a helical span at residues 128 to 148; sequence VWHKYAMYMLGLGSAVSLFGI. At 149 to 181 the chain is on the mitochondrial intermembrane side; the sequence is YKLETENDGVVGLVKSLWDSSEKDNSQKIEAKK.

This sequence belongs to the CybS family. As to quaternary structure, forms part of complex II containing four subunits: a flavoprotein (FP), an iron-sulfur protein (IP) and a cytochrome b composed of a large and a small subunit.

It is found in the mitochondrion inner membrane. Its pathway is carbohydrate metabolism; tricarboxylic acid cycle. Its function is as follows. Membrane-anchoring subunit of succinate dehydrogenase (SDH) that is involved in system II of the mitochondrial electron transport chain and is responsible for transferring electrons from succinate to ubiquinone (coenzyme Q). SDH3 and SDH4 form the membrane dimer that anchors the catalytic dimer formed by SDH1 and SDH2 to the matrix surface of the mitochondrial inner membrane. Electrons originating from the catalytic dimer enter the membrane dimer for ubiquinone reduction. This Saccharomyces cerevisiae (strain ATCC 204508 / S288c) (Baker's yeast) protein is Succinate dehydrogenase [ubiquinone] cytochrome b small subunit, mitochondrial (SDH4).